The chain runs to 297 residues: Acetylglutamate kinase (297 aa).

Residues 72 to 73, Arg-94, and Asn-193 contribute to the substrate site; that span reads GG.

It belongs to the acetylglutamate kinase family. ArgB subfamily.

It localises to the cytoplasm. It catalyses the reaction N-acetyl-L-glutamate + ATP = N-acetyl-L-glutamyl 5-phosphate + ADP. It participates in amino-acid biosynthesis; L-arginine biosynthesis; N(2)-acetyl-L-ornithine from L-glutamate: step 2/4. Its function is as follows. Catalyzes the ATP-dependent phosphorylation of N-acetyl-L-glutamate. This Mycobacterium leprae (strain TN) protein is Acetylglutamate kinase.